The primary structure comprises 70 residues: Putative membrane protein insertion efficiency factor (70 aa).

Belongs to the UPF0161 family.

Its subcellular location is the cell membrane. In terms of biological role, could be involved in insertion of integral membrane proteins into the membrane. In Chloroflexus aurantiacus (strain ATCC 29366 / DSM 635 / J-10-fl), this protein is Putative membrane protein insertion efficiency factor.